Reading from the N-terminus, the 176-residue chain is Nutrient stress-induced DNA-binding protein (176 aa).

Belongs to the Dps family. In terms of assembly, hexamer.

Involved in protection of chromosomal DNA from damage under nutrient-limited and oxidative stress conditions. Binds heme. This chain is Nutrient stress-induced DNA-binding protein (dpsA), found in Synechococcus sp. (strain ATCC 27144 / PCC 6301 / SAUG 1402/1) (Anacystis nidulans).